The sequence spans 271 residues: Aquaporin-2 (271 aa).

Residues 1-11 (MWELRSIAFSR) are Cytoplasmic-facing. Residues 12–32 (AVFAEFLATLLFVFFGLGSAL) traverse the membrane as a helical segment. The Extracellular portion of the chain corresponds to 33–40 (NWPQALPS). Residues 41–59 (VLQIAMAFGLGIGTLVQAL) form a helical membrane-spanning segment. Over 60–64 (GHISG) the chain is Cytoplasmic. An intramembrane region (discontinuously helical) is located at residues 65-74 (AHINPAVTVA). Positions 68–70 (NPA) match the NPA 1 motif. The Cytoplasmic portion of the chain corresponds to 75–85 (CLVGCHVSVLR). The helical transmembrane segment at 86–107 (AAFYVAAQLLGAVAGAALLHEI) threads the bilayer. Residues 108-127 (TPADIRGDLAVNALSNSTTA) are Extracellular-facing. Asn123 carries N-linked (GlcNAc...) asparagine glycosylation. The helical transmembrane segment at 128 to 148 (GQAVTVELFLTLQLVLCIFAS) threads the bilayer. The Cytoplasmic segment spans residues 149-156 (TDERRGEN). A helical membrane pass occupies residues 157-176 (PGTPALSIGFSVALGHLLGI). At 177–180 (HYTG) the chain is on the extracellular side. An intramembrane region (discontinuously helical) is located at residues 181–193 (CSMNPARSLAPAV). Positions 184–186 (NPA) match the NPA 2 motif. Topologically, residues 194-201 (VTGKFDDH) are extracellular. The chain crosses the membrane as a helical span at residues 202 to 222 (WVFWIGPLVGAILGSLLYNYV). At 223–271 (LFPPAKSLSERLAVLKGLEPDTDWEEREVRRRQSVELHSPQSLPRGTKA) the chain is on the cytoplasmic side. The tract at residues 248-271 (EREVRRRQSVELHSPQSLPRGTKA) is disordered. Ser256 carries the post-translational modification Phosphoserine; by PKA. Residues 261–271 (SPQSLPRGTKA) are compositionally biased toward polar residues.

The protein belongs to the MIP/aquaporin (TC 1.A.8) family. As to quaternary structure, homotetramer. Interacts with micropeptide MIAC; the interaction leads to a reduction of filamentous actin fibers and inhibition of the EREG/EGFR signaling pathway. In terms of processing, ser-256 phosphorylation is necessary and sufficient for expression at the apical membrane. Endocytosis is not phosphorylation-dependent. Post-translationally, N-glycosylated. Expressed in collecting tubules in kidney medulla (at protein level). Detected in kidney.

Its subcellular location is the apical cell membrane. The protein resides in the basolateral cell membrane. The protein localises to the cell membrane. It is found in the cytoplasmic vesicle membrane. It localises to the golgi apparatus. Its subcellular location is the trans-Golgi network membrane. The catalysed reaction is H2O(in) = H2O(out). It carries out the reaction glycerol(in) = glycerol(out). In terms of biological role, forms a water-specific channel that provides the plasma membranes of renal collecting duct with high permeability to water, thereby permitting water to move in the direction of an osmotic gradient. Plays an essential role in renal water homeostasis. Could also be permeable to glycerol. In Homo sapiens (Human), this protein is Aquaporin-2.